Consider the following 642-residue polypeptide: Threonine--tRNA ligase (642 aa).

The 61-residue stretch at 1–61 (MPVITLPDGS…ETDATLSIIT (61 aa)) folds into the TGS domain. The tract at residues 243–534 (DHRKIGKQLD…LTEETAGYFP (292 aa)) is catalytic. Residues Cys334, His385, and His511 each contribute to the Zn(2+) site.

The protein belongs to the class-II aminoacyl-tRNA synthetase family. Homodimer. It depends on Zn(2+) as a cofactor.

It localises to the cytoplasm. The catalysed reaction is tRNA(Thr) + L-threonine + ATP = L-threonyl-tRNA(Thr) + AMP + diphosphate + H(+). In terms of biological role, catalyzes the attachment of threonine to tRNA(Thr) in a two-step reaction: L-threonine is first activated by ATP to form Thr-AMP and then transferred to the acceptor end of tRNA(Thr). Also edits incorrectly charged L-seryl-tRNA(Thr). In Tolumonas auensis (strain DSM 9187 / NBRC 110442 / TA 4), this protein is Threonine--tRNA ligase.